A 223-amino-acid chain; its full sequence is Endonuclease NucS (223 aa).

It belongs to the NucS endonuclease family.

It is found in the cytoplasm. Cleaves both 3' and 5' ssDNA extremities of branched DNA structures. The chain is Endonuclease NucS from Streptomyces coelicolor (strain ATCC BAA-471 / A3(2) / M145).